The primary structure comprises 399 residues: Dihydrolipoyllysine-residue succinyltransferase component of 2-oxoglutarate dehydrogenase complex (399 aa).

The region spanning 2 to 77 (AIDIKAPTFP…LSGELLGKLT (76 aa)) is the Lipoyl-binding domain. Lys43 carries the N6-lipoyllysine modification. In terms of domain architecture, Peripheral subunit-binding (PSBD) spans 104–141 (ILSPAARKIAEENAIAADSITGTGKGGRVTKEDAVAAA). Catalysis depends on residues His370 and Asp374.

Belongs to the 2-oxoacid dehydrogenase family. As to quaternary structure, forms a 24-polypeptide structural core with octahedral symmetry. Part of the 2-oxoglutarate dehydrogenase (OGDH) complex composed of E1 (2-oxoglutarate dehydrogenase), E2 (dihydrolipoamide succinyltransferase) and E3 (dihydrolipoamide dehydrogenase); the complex contains multiple copies of the three enzymatic components (E1, E2 and E3). The cofactor is (R)-lipoate.

The catalysed reaction is N(6)-[(R)-dihydrolipoyl]-L-lysyl-[protein] + succinyl-CoA = N(6)-[(R)-S(8)-succinyldihydrolipoyl]-L-lysyl-[protein] + CoA. The protein operates within amino-acid degradation; L-lysine degradation via saccharopine pathway; glutaryl-CoA from L-lysine: step 6/6. E2 component of the 2-oxoglutarate dehydrogenase (OGDH) complex which catalyzes the second step in the conversion of 2-oxoglutarate to succinyl-CoA and CO(2). The protein is Dihydrolipoyllysine-residue succinyltransferase component of 2-oxoglutarate dehydrogenase complex (sucB) of Azotobacter vinelandii.